A 505-amino-acid polypeptide reads, in one-letter code: Maturase K (505 aa).

Belongs to the intron maturase 2 family. MatK subfamily.

The protein localises to the plastid. Its subcellular location is the chloroplast. Its function is as follows. Usually encoded in the trnK tRNA gene intron. Probably assists in splicing its own and other chloroplast group II introns. The chain is Maturase K from Phaulothamnus spinescens (Snake-eyes).